Reading from the N-terminus, the 137-residue chain is Nucleoside diphosphate kinase (137 aa).

K9, F57, R85, T91, R102, and N112 together coordinate ATP. Catalysis depends on H115, which acts as the Pros-phosphohistidine intermediate.

This sequence belongs to the NDK family. As to quaternary structure, homotetramer. Mg(2+) is required as a cofactor.

It localises to the cytoplasm. It catalyses the reaction a 2'-deoxyribonucleoside 5'-diphosphate + ATP = a 2'-deoxyribonucleoside 5'-triphosphate + ADP. It carries out the reaction a ribonucleoside 5'-diphosphate + ATP = a ribonucleoside 5'-triphosphate + ADP. Functionally, major role in the synthesis of nucleoside triphosphates other than ATP. The ATP gamma phosphate is transferred to the NDP beta phosphate via a ping-pong mechanism, using a phosphorylated active-site intermediate. The chain is Nucleoside diphosphate kinase from Sulfurimonas denitrificans (strain ATCC 33889 / DSM 1251) (Thiomicrospira denitrificans (strain ATCC 33889 / DSM 1251)).